Consider the following 275-residue polypeptide: Large ribosomal subunit protein uL2 (275 aa).

The segment covering 38–53 has biased composition (polar residues); the sequence is SSKAGRNNNGRITTRH. Disordered regions lie at residues 38–59 and 224–257; these read SSKA…GGHK and AMNP…KGFR.

Belongs to the universal ribosomal protein uL2 family. In terms of assembly, part of the 50S ribosomal subunit. Forms a bridge to the 30S subunit in the 70S ribosome.

Functionally, one of the primary rRNA binding proteins. Required for association of the 30S and 50S subunits to form the 70S ribosome, for tRNA binding and peptide bond formation. It has been suggested to have peptidyltransferase activity; this is somewhat controversial. Makes several contacts with the 16S rRNA in the 70S ribosome. This Burkholderia multivorans (strain ATCC 17616 / 249) protein is Large ribosomal subunit protein uL2.